The sequence spans 305 residues: Beta-lactamase ROB-1 (305 aa).

Residues 1-33 (MLNKLKIGTLLLLTLTACSPNSVHSVTSNPQPA) form the signal peptide. S86 functions as the Acyl-ester intermediate in the catalytic mechanism. A substrate-binding site is contributed by 248–250 (KSG).

This sequence belongs to the class-A beta-lactamase family.

It catalyses the reaction a beta-lactam + H2O = a substituted beta-amino acid. In Actinobacillus pleuropneumoniae (Haemophilus pleuropneumoniae), this protein is Beta-lactamase ROB-1 (rob1).